The chain runs to 140 residues: uncharacterized protein (140 aa).

This is an uncharacterized protein from Acanthamoeba polyphaga mimivirus (APMV).